Consider the following 31-residue polypeptide: Glucagon-3 (31 aa).

It belongs to the glucagon family.

The protein localises to the secreted. In terms of biological role, glucagon plays a key role in glucose metabolism and homeostasis. Regulates blood glucose by increasing gluconeogenesis and decreasing glycolysis. The protein is Glucagon-3 of Huso dauricus (Kaluga sturgeon).